We begin with the raw amino-acid sequence, 209 residues long: CAAX box protein 1 (209 aa).

The tract at residues 182–209 (TAGRPPRDLSPSARPISSPPPETSCVLA) is disordered. Position 206 is a cysteine methyl ester (Cys-206). Cys-206 carries S-farnesyl cysteine lipidation. A propeptide spans 207–209 (VLA) (removed in mature form).

Ubiquitous.

The protein resides in the cell membrane. This Homo sapiens (Human) protein is CAAX box protein 1.